A 149-amino-acid chain; its full sequence is Transcriptional regulator MraZ (149 aa).

2 consecutive SpoVT-AbrB domains span residues Arg6–Asp52 and Ala81–Lys124.

The protein belongs to the MraZ family. Forms oligomers.

Its subcellular location is the cytoplasm. The protein resides in the nucleoid. This chain is Transcriptional regulator MraZ, found in Nitratidesulfovibrio vulgaris (strain ATCC 29579 / DSM 644 / CCUG 34227 / NCIMB 8303 / VKM B-1760 / Hildenborough) (Desulfovibrio vulgaris).